A 715-amino-acid polypeptide reads, in one-letter code: Putative pentatricopeptide repeat-containing protein At3g23330 (715 aa).

PPR repeat units follow at residues 38-68, 69-103, 104-138, 139-172, 206-240, 241-275, 276-306, 307-341, 342-376, 377-407, 408-442, 443-473, and 479-509; these read SHTSASIVISIYTNLKLLHEALLLFKTLKSP, PVLAWKSVIRCFTDQSLFSKALASFVEMRASGRCP, DHNVFPSVLKSCTMMMDLRFGESVHGFIVRLGMDC, DLYTGNALMNMYAKLLGMGSKISVGNVFDEMPQR, DVVSYNTIIAGYAQSGMYEDALRMVREMGTTDLKP, DSFTLSSVLPIFSEYVDVIKGKEIHGYVIRKGIDS, DVYIGSSLVDMYAKSARIEDSERVFSRLYCR, DGISWNSLVAGYVQNGRYNEALRLFRQMVTAKVKP, GAVAFSSVIPACAHLATLHLGKQLHGYVLRGGFGS, NIFIASALVDMYSKCGNIKAARKIFDRMNVL, DEVSWTAIIMGHALHGHGHEAVSLFEEMKRQGVKP, NQVAFVAVLTACSHVGLVDEAWGYFNSMTKV, and ELEHYAAVADLLGRAGKLEEAYNFISKMCVE. The segment at 514–589 is type E motif; it reads VWSTLLSSCS…KPACSWIEMK (76 aa). The type E(+) motif stretch occupies residues 590 to 620; sequence NKTHGFVSGDRSHPSMDKINEFLKAVMEQME. A type DYW motif region spans residues 621–715; that stretch reads KEGYVADTSG…RGNCSCGDYW (95 aa).

The protein belongs to the PPR family. PCMP-H subfamily.

The protein is Putative pentatricopeptide repeat-containing protein At3g23330 (PCMP-H32) of Arabidopsis thaliana (Mouse-ear cress).